The following is a 248-amino-acid chain: Pulmonary surfactant-associated protein A (248 aa).

The first 17 residues, Met1–Gly17, serve as a signal peptide directing secretion. A Collagen-like domain is found at Gly28 to Pro100. A disordered region spans residues Ser29–Leu103. Residues Pro42 to Lys51 are compositionally biased toward basic and acidic residues. Residues Pro54–Gly65 show a composition bias toward pro residues. The span at Leu69 to Pro82 shows a compositional bias: low complexity. Positions Glu84–Glu93 are enriched in basic and acidic residues. In terms of domain architecture, C-type lectin spans Leu127–Glu247. 2 cysteine pairs are disulfide-bonded: Cys155–Cys246 and Cys224–Cys238. Asn207 carries N-linked (GlcNAc...) asparagine glycosylation. Positions 215, 217, 234, and 235 each coordinate Ca(2+).

The protein belongs to the SFTPA family. As to quaternary structure, oligomeric complex of 6 set of homotrimers.

It is found in the secreted. The protein resides in the extracellular space. It localises to the extracellular matrix. The protein localises to the surface film. Its function is as follows. In presence of calcium ions, it binds to surfactant phospholipids and contributes to lower the surface tension at the air-liquid interface in the alveoli of the mammalian lung and is essential for normal respiration. Enhances the expression of MYO18A/SP-R210 on alveolar macrophages. The chain is Pulmonary surfactant-associated protein A (SFTPA1) from Ovis aries (Sheep).